The following is a 454-amino-acid chain: Probable tRNA methyltransferase 9B (454 aa).

Ser-214 carries the post-translational modification Phosphoserine.

This sequence belongs to the methyltransferase superfamily. As to expression, down-regulated in breast, bladder, colorectal, cervix and testicular carcinomas.

In terms of biological role, may modify wobble uridines in specific arginine and glutamic acid tRNAs. Acts as a tumor suppressor by promoting the expression of LIN9. The sequence is that of Probable tRNA methyltransferase 9B from Homo sapiens (Human).